A 253-amino-acid chain; its full sequence is E3 ubiquitin-protein ligase MARCHF3 (253 aa).

The RING-CH-type zinc-finger motif lies at 63–123 (SPFNDRPMCR…ELCHFRFAVE (61 aa)). Residues C71, C74, C87, C89, H97, C100, C113, and C116 each contribute to the Zn(2+) site. Helical transmembrane passes span 145–165 (LFGD…SGWL) and 182–202 (AVGL…WTLV). Residues S237 and S243 each carry the phosphoserine modification.

Interacts with MARCHF2 and STX6. In terms of tissue distribution, expressed predominantly in lung, colon and spleen. Present in liver (at protein level).

Its subcellular location is the cytoplasmic vesicle membrane. It localises to the early endosome membrane. The catalysed reaction is S-ubiquitinyl-[E2 ubiquitin-conjugating enzyme]-L-cysteine + [acceptor protein]-L-lysine = [E2 ubiquitin-conjugating enzyme]-L-cysteine + N(6)-ubiquitinyl-[acceptor protein]-L-lysine.. The protein operates within protein modification; protein ubiquitination. Its function is as follows. E3 ubiquitin-protein ligase which may be involved in endosomal trafficking. E3 ubiquitin ligases accept ubiquitin from an E2 ubiquitin-conjugating enzyme in the form of a thioester and then directly transfer the ubiquitin to targeted substrates. This Rattus norvegicus (Rat) protein is E3 ubiquitin-protein ligase MARCHF3 (Marchf3).